The chain runs to 271 residues: Tryptophan synthase alpha chain (271 aa).

Residues Glu49 and Asp60 each act as proton acceptor in the active site.

It belongs to the TrpA family. As to quaternary structure, tetramer of two alpha and two beta chains.

It catalyses the reaction (1S,2R)-1-C-(indol-3-yl)glycerol 3-phosphate + L-serine = D-glyceraldehyde 3-phosphate + L-tryptophan + H2O. It functions in the pathway amino-acid biosynthesis; L-tryptophan biosynthesis; L-tryptophan from chorismate: step 5/5. The alpha subunit is responsible for the aldol cleavage of indoleglycerol phosphate to indole and glyceraldehyde 3-phosphate. The polypeptide is Tryptophan synthase alpha chain (Burkholderia cenocepacia (strain HI2424)).